The following is a 324-amino-acid chain: tRNA N6-adenosine threonylcarbamoyltransferase (324 aa).

Fe cation is bound by residues His-107, His-111, and Tyr-127. Substrate contacts are provided by residues 127–131 (YVSGG), Asp-159, Gly-172, Glu-176, and Asn-257. Asp-285 contacts Fe cation.

It belongs to the KAE1 / TsaD family. As to quaternary structure, monomer. Component of the KEOPS complex that consists of Kae1, Bud32, Cgi121 and Pcc1; the whole complex dimerizes. The cofactor is Fe(2+).

Its subcellular location is the cytoplasm. The enzyme catalyses L-threonylcarbamoyladenylate + adenosine(37) in tRNA = N(6)-L-threonylcarbamoyladenosine(37) in tRNA + AMP + H(+). Functionally, required for the formation of a threonylcarbamoyl group on adenosine at position 37 (t(6)A37) in tRNAs that read codons beginning with adenine. Is a component of the KEOPS complex that is probably involved in the transfer of the threonylcarbamoyl moiety of threonylcarbamoyl-AMP (TC-AMP) to the N6 group of A37. Kae1 likely plays a direct catalytic role in this reaction, but requires other protein(s) of the complex to fulfill this activity. The polypeptide is tRNA N6-adenosine threonylcarbamoyltransferase (Pyrococcus horikoshii (strain ATCC 700860 / DSM 12428 / JCM 9974 / NBRC 100139 / OT-3)).